We begin with the raw amino-acid sequence, 518 residues long: ATP synthase subunit alpha (518 aa).

Residue 169 to 176 coordinates ATP; the sequence is GDRKTGKT.

It belongs to the ATPase alpha/beta chains family. In terms of assembly, F-type ATPases have 2 components, CF(1) - the catalytic core - and CF(0) - the membrane proton channel. CF(1) has five subunits: alpha(3), beta(3), gamma(1), delta(1), epsilon(1). CF(0) has three main subunits: a(1), b(2) and c(9-12). The alpha and beta chains form an alternating ring which encloses part of the gamma chain. CF(1) is attached to CF(0) by a central stalk formed by the gamma and epsilon chains, while a peripheral stalk is formed by the delta and b chains.

It localises to the cell membrane. The catalysed reaction is ATP + H2O + 4 H(+)(in) = ADP + phosphate + 5 H(+)(out). Functionally, produces ATP from ADP in the presence of a proton gradient across the membrane. The alpha chain is a regulatory subunit. The polypeptide is ATP synthase subunit alpha (Enterococcus hirae (strain ATCC 9790 / DSM 20160 / JCM 8729 / LMG 6399 / NBRC 3181 / NCIMB 6459 / NCDO 1258 / NCTC 12367 / WDCM 00089 / R)).